The primary structure comprises 458 residues: MREIVHIQAGQCGNQIGAKFWEVISEEHGIDSSGAYIGTSDLQLDRAEVYYNEGSGGRYVPRAVLVDLEPGVLDTIKAGPHGGLYRPDNFVAGQSGAGNNWAKGHYTEGAELVDSVLDVVRREAEGCDCLQGFQVTHSLGGGTGSGMGTLLVSKIREEFPDRMMCTYSVMPSPKVSDTVVEPYNCTLSVHQLVENADAVFCIDNEALYNICYNTLKKPEPAYPDLNKLVSGVMSGITSSLRFPGQLNSDLRKLAVNLVPFPRLHFFMIGYAPLSADGVTAYRAKTVADLTKQMFDPKNMMADCDPRNGRYLTASAYFRGKVSTKEVEEQMDAIQTKNSGQFIDWIPNAIKASVCDVAPTGETMSAAFIGNSTAIQDIFKRVGSHFSAMFKRKAFLHWYTGEGMDEMEFTEAESNMNDLVSELQQYEAATVEGEEEEDEYAEGGVVNGDQSYDEPYQAA.

Positions 11, 69, 138, 142, 143, 144, 204, and 226 each coordinate GTP. Glu69 provides a ligand contact to Mg(2+). Positions 426 to 458 (EAATVEGEEEEDEYAEGGVVNGDQSYDEPYQAA) are disordered. Residues 431–440 (EGEEEEDEYA) show a composition bias toward acidic residues.

It belongs to the tubulin family. As to quaternary structure, dimer of alpha and beta chains. A typical microtubule is a hollow water-filled tube with an outer diameter of 25 nm and an inner diameter of 15 nM. Alpha-beta heterodimers associate head-to-tail to form protofilaments running lengthwise along the microtubule wall with the beta-tubulin subunit facing the microtubule plus end conferring a structural polarity. Microtubules usually have 13 protofilaments but different protofilament numbers can be found in some organisms and specialized cells. The cofactor is Mg(2+).

It localises to the cytoplasm. Its subcellular location is the cytoskeleton. Functionally, tubulin is the major constituent of microtubules, a cylinder consisting of laterally associated linear protofilaments composed of alpha- and beta-tubulin heterodimers. Microtubules grow by the addition of GTP-tubulin dimers to the microtubule end, where a stabilizing cap forms. Below the cap, tubulin dimers are in GDP-bound state, owing to GTPase activity of alpha-tubulin. This Pyropia yezoensis (Susabi-nori) protein is Tubulin beta chain (TUBB1).